The sequence spans 151 residues: Methylglyoxal synthase (151 aa).

The MGS-like domain maps to 6–151; that stretch reads RTMPAHKHVA…DYDAYLAERT (146 aa). Substrate contacts are provided by residues H19, K23, 45 to 48, and 65 to 66; these read TGTT and SG. The active-site Proton donor/acceptor is D71. H98 lines the substrate pocket.

The protein belongs to the methylglyoxal synthase family.

It catalyses the reaction dihydroxyacetone phosphate = methylglyoxal + phosphate. Catalyzes the formation of methylglyoxal from dihydroxyacetone phosphate. The sequence is that of Methylglyoxal synthase from Vibrio campbellii (strain ATCC BAA-1116).